A 77-amino-acid chain; its full sequence is MKEQKLIHEGLITESLPNGMFRVRLDNEDLILGYVSGRIRRSFIRILPGDRVKIEVSRYDSTRGRIIYRLRNKDSND.

In terms of domain architecture, S1-like spans 1-71; sequence MKEQKLIHEG…TRGRIIYRLR (71 aa).

The protein belongs to the IF-1 family. Component of the 30S ribosomal translation pre-initiation complex which assembles on the 30S ribosome in the order IF-2 and IF-3, IF-1 and N-formylmethionyl-tRNA(fMet); mRNA recruitment can occur at any time during PIC assembly.

It localises to the plastid. It is found in the chloroplast. Functionally, one of the essential components for the initiation of protein synthesis. Stabilizes the binding of IF-2 and IF-3 on the 30S subunit to which N-formylmethionyl-tRNA(fMet) subsequently binds. Helps modulate mRNA selection, yielding the 30S pre-initiation complex (PIC). Upon addition of the 50S ribosomal subunit IF-1, IF-2 and IF-3 are released leaving the mature 70S translation initiation complex. This is Translation initiation factor IF-1, chloroplastic from Liriodendron tulipifera (Tuliptree).